Reading from the N-terminus, the 336-residue chain is P2Y purinoceptor 13 (336 aa).

Over 1–32 (MLGTVNTTGMQGFNKSERCPRDTRMTQLLFPV) the chain is Extracellular. N-linked (GlcNAc...) asparagine glycosylation is found at Asn6 and Asn14. Residues 33-53 (LYTVVFFTGVLLNTLALWVFI) traverse the membrane as a helical segment. At 54-60 (HIPSNST) the chain is on the cytoplasmic side. A helical transmembrane segment spans residues 61–81 (FIIYLKNTLVADLIMTLMLPF). Topologically, residues 82–100 (KILSDSRLAPWQLRGFVCT) are extracellular. A disulfide bond links Cys99 and Cys176. The chain crosses the membrane as a helical span at residues 101 to 121 (FSSVVFYETMYVGIMMLGLIA). At 122–144 (FDRFLKIVVPFRKTFVKKTAFAK) the chain is on the cytoplasmic side. Residues 145–165 (IVSISIWLLMFLISLPNMILN) form a helical membrane-spanning segment. At 166–193 (KEATASTVKKCASLKSPLGLLWHQVVSH) the chain is on the extracellular side. The chain crosses the membrane as a helical span at residues 194–214 (TCQFIFWTVFILMLLFYTVIA). Over 215–237 (KKVYDSYRKFKSRDSKHKRLEAK) the chain is Cytoplasmic. Residues 238–258 (VFIVMAVFFVCFAPFHFVRVP) form a helical membrane-spanning segment. At 259–281 (YTHSQTTNKTDCRLENQLFLAKE) the chain is on the extracellular side. Residue Asn266 is glycosylated (N-linked (GlcNAc...) asparagine). The helical transmembrane segment at 282-302 (STLFLATTNICMDPLIYIILC) threads the bilayer. Residues 303–336 (KKFTRKVPCMRWRTKTAASSDEHHSSQTDNITLS) are Cytoplasmic-facing.

The protein belongs to the G-protein coupled receptor 1 family. As to expression, highest levels in spleen, liver brain and kidney. Lower but significant level are also detected in intestine, stomach, skeletal muscle, testis, heart and lung.

The protein localises to the cell membrane. Its function is as follows. Receptor for ADP. Coupled to G(i)-proteins. May play a role in hematopoiesis and the immune system. This is P2Y purinoceptor 13 (P2ry13) from Rattus norvegicus (Rat).